Consider the following 343-residue polypeptide: Protein RecA (343 aa).

66-73 (GPESSGKT) contacts ATP. Positions 319 to 343 (IERQIREKHLPKRSAKADEAESAEA) are disordered.

Belongs to the RecA family.

It localises to the cytoplasm. Can catalyze the hydrolysis of ATP in the presence of single-stranded DNA, the ATP-dependent uptake of single-stranded DNA by duplex DNA, and the ATP-dependent hybridization of homologous single-stranded DNAs. It interacts with LexA causing its activation and leading to its autocatalytic cleavage. The chain is Protein RecA from Thioalkalivibrio sulfidiphilus (strain HL-EbGR7).